The sequence spans 116 residues: Ferredoxin-like protein in nif region (116 aa).

The 4Fe-4S ferredoxin-type domain maps to 2–29 (AYTITSQCISCKLCSSVCPTGAIKIAEN). Iron-sulfur cluster contacts are provided by cysteine 9, cysteine 12, cysteine 15, and cysteine 19.

This is Ferredoxin-like protein in nif region (fdxN) from Nostoc sp. (strain PCC 7120 / SAG 25.82 / UTEX 2576).